The following is a 393-amino-acid chain: Acetylornithine aminotransferase (393 aa).

Residues 96–97 (GT) and Phe129 each bind pyridoxal 5'-phosphate. Residue Arg132 participates in N(2)-acetyl-L-ornithine binding. Position 214 to 217 (214 to 217 (DEVQ)) interacts with pyridoxal 5'-phosphate. Lys243 is subject to N6-(pyridoxal phosphate)lysine. Ser271 contributes to the N(2)-acetyl-L-ornithine binding site. Thr272 provides a ligand contact to pyridoxal 5'-phosphate.

Belongs to the class-III pyridoxal-phosphate-dependent aminotransferase family. ArgD subfamily. As to quaternary structure, homodimer. The cofactor is pyridoxal 5'-phosphate.

It localises to the cytoplasm. It carries out the reaction N(2)-acetyl-L-ornithine + 2-oxoglutarate = N-acetyl-L-glutamate 5-semialdehyde + L-glutamate. It participates in amino-acid biosynthesis; L-arginine biosynthesis; N(2)-acetyl-L-ornithine from L-glutamate: step 4/4. This chain is Acetylornithine aminotransferase, found in Rhodobacter capsulatus (strain ATCC BAA-309 / NBRC 16581 / SB1003).